The following is a 373-amino-acid chain: 4-hydroxy-3-methylbut-2-en-1-yl diphosphate synthase (flavodoxin) (373 aa).

[4Fe-4S] cluster-binding residues include Cys-270, Cys-273, Cys-305, and Glu-312.

It belongs to the IspG family. The cofactor is [4Fe-4S] cluster.

It carries out the reaction (2E)-4-hydroxy-3-methylbut-2-enyl diphosphate + oxidized [flavodoxin] + H2O + 2 H(+) = 2-C-methyl-D-erythritol 2,4-cyclic diphosphate + reduced [flavodoxin]. Its pathway is isoprenoid biosynthesis; isopentenyl diphosphate biosynthesis via DXP pathway; isopentenyl diphosphate from 1-deoxy-D-xylulose 5-phosphate: step 5/6. Functionally, converts 2C-methyl-D-erythritol 2,4-cyclodiphosphate (ME-2,4cPP) into 1-hydroxy-2-methyl-2-(E)-butenyl 4-diphosphate. This Klebsiella pneumoniae (strain 342) protein is 4-hydroxy-3-methylbut-2-en-1-yl diphosphate synthase (flavodoxin).